The sequence spans 547 residues: MAAKLIKFDQEARNCILKGVNTLADAVKVTLGPKGRNVVIEKSYGAPLITKDGVTVAKEIELEDKFENMGAQLVKEVASKTSDVAGDGTTTATVLAQAIYRQGAKLVAAGHNPMEIKRGLDQAVEALVAELKNISKPIKDHKEIAQVGTISANNDKTIGDIIAEAMEKVGKEGVITVEEAKAMETTLETVEGMQFDRGYLSPYFVTDPERMEAAMDNVAILIHDKKIANMKDLLPVLEQTAKSGRPLLIIAEDIEGEALATLVVNKLRGVLNVCAVKAPGFGDRRKAMLEDIAILTGGKVISEEVGFKLENTTLDMLGQAKKITVDKDNTTIIDGFGAEADIQGRVKMIRAQIDETSSDYDREKLQERLAKLVGGVAVIKVGAATEIEMKEKKARVEDALHATRAAVDEGIVPGGGVAYLRAMKVLENLQLAPEQQFGVNVIKRALEEPIRQISQNAGVDGSIVVDKVKNGKDAFGYNAADDVYVDMIEAGIIDPTKVSRSALQNAASVAGLMMTTEAMIADKPKEEGAMPAMPGGMGGMGGMGGMM.

ATP is bound by residues 30-33, Lys51, 87-91, Gly415, 478-480, and Asp494; these read TLGP, DGTTT, and NAA.

This sequence belongs to the chaperonin (HSP60) family. In terms of assembly, forms a cylinder of 14 subunits composed of two heptameric rings stacked back-to-back. Interacts with the co-chaperonin GroES.

The protein resides in the cytoplasm. It catalyses the reaction ATP + H2O + a folded polypeptide = ADP + phosphate + an unfolded polypeptide.. In terms of biological role, together with its co-chaperonin GroES, plays an essential role in assisting protein folding. The GroEL-GroES system forms a nano-cage that allows encapsulation of the non-native substrate proteins and provides a physical environment optimized to promote and accelerate protein folding. The polypeptide is Chaperonin GroEL (Geobacter sp. (strain M21)).